The sequence spans 854 residues: Nucleolar MIF4G domain-containing protein 1 (854 aa).

The interval 2–275 (PRNVPEVNGV…EEDPDWQVLQ (274 aa)) is necessary for nucleolar localization and for targeting PPP1CA to the nucleolus. Phosphoserine is present on serine 60. Disordered stretches follow at residues 66–215 (ESRS…PLSF) and 231–333 (SGGG…GEKY). Residues 76–99 (PGGRKSRKELRKEKRHLRKARRLQ) show a composition bias toward basic residues. Residues 104-113 (SGSGDQGGNV) are compositionally biased toward gly residues. Residues 128–173 (VRPTPAKATATPAKASAPSTNTKASAAQPKAKAKGAPGKPGPATAT) show a composition bias toward low complexity. A compositionally biased stretch (basic and acidic residues) spans 188–197 (REIRKLERCL). The span at 265–280 (SEEDPDWQVLQEDQED) shows a compositional bias: acidic residues. Basic and acidic residues-rich tracts occupy residues 281 to 291 (VNSKRRGEAES), 303 to 315 (RFAEVVEKSRSSS), and 322 to 331 (QESHSVESGE). The Required for efficient binding to PPP1CA and for targeting PPP1CA to the nucleolus motif lies at 301–304 (KVRF). Phosphoserine occurs at positions 311, 314, and 315. In terms of domain architecture, MIF4G spans 356 to 553 (KKHVKGLINR…ETMLALKNND (198 aa)). The 117-residue stretch at 648-764 (DVRRIIFCTL…PLSVLKVVEF (117 aa)) folds into the MI domain.

Belongs to the CWC22 family. May interact with EIF4A1, EIF4A2 and EIF4A3. Interacts with PPP1CA and PPP1CC.

The protein resides in the nucleus. Its subcellular location is the nucleolus. Plays a role in targeting PPP1CA to the nucleolus. The protein is Nucleolar MIF4G domain-containing protein 1 (Nom1) of Mus musculus (Mouse).